A 422-amino-acid chain; its full sequence is MNIDVWIKNITQLVTVQAHGKPKKGKEMQDVGIIQDGWIAVAGDRIVGIGSGEISADFQVGENTVIISGEGKTVTPGLIDPHTHLVHAGSRENELALKLKGVPYLEILKQGGGILSTVNATKKATMEELVAQSKKSLDRMLSYGVTTVEIKSGYGLELEAEIKQLEAIHRLQQQTPMDLVSTFMGAHAIPKEYKENPEEFIDLIIEEMLPAIKEKNLAEFCDVFCEEGVFSVDQTRRILEAARSLGFKNKIHADEIVPLGGAELAAELQTISAEHLMAASETGLKMMAESNVVPVALPGTSFNLATGKYADARKMIEYGLPVALATDYNPGSCPTENIQLIMSIGCLYLKMTPEEVISAVTINAAAAIDRTQEIGSIEVGKKADITIFDAPNLYYIPYHFGVNHVDTVLKSGKIVVEKGNVI.

Positions 82 and 84 each coordinate Fe(3+). Residues H82 and H84 each coordinate Zn(2+). 4-imidazolone-5-propanoate is bound by residues R91, Y154, and H187. Y154 is an N-formimidoyl-L-glutamate binding site. Residue H252 participates in Fe(3+) binding. Residue H252 coordinates Zn(2+). E255 is a 4-imidazolone-5-propanoate binding site. D327 is a Fe(3+) binding site. Position 327 (D327) interacts with Zn(2+). N-formimidoyl-L-glutamate is bound by residues N329 and G331. S332 is a 4-imidazolone-5-propanoate binding site.

The protein belongs to the metallo-dependent hydrolases superfamily. HutI family. It depends on Zn(2+) as a cofactor. Fe(3+) serves as cofactor.

The protein resides in the cytoplasm. It catalyses the reaction 4-imidazolone-5-propanoate + H2O = N-formimidoyl-L-glutamate. It functions in the pathway amino-acid degradation; L-histidine degradation into L-glutamate; N-formimidoyl-L-glutamate from L-histidine: step 3/3. Functionally, catalyzes the hydrolytic cleavage of the carbon-nitrogen bond in imidazolone-5-propanoate to yield N-formimidoyl-L-glutamate. It is the third step in the universal histidine degradation pathway. This Alkaliphilus oremlandii (strain OhILAs) (Clostridium oremlandii (strain OhILAs)) protein is Imidazolonepropionase.